A 427-amino-acid chain; its full sequence is Glutamate-1-semialdehyde 2,1-aminomutase (427 aa).

N6-(pyridoxal phosphate)lysine is present on Lys-264.

The protein belongs to the class-III pyridoxal-phosphate-dependent aminotransferase family. HemL subfamily. As to quaternary structure, homodimer. The cofactor is pyridoxal 5'-phosphate.

The protein resides in the cytoplasm. It catalyses the reaction (S)-4-amino-5-oxopentanoate = 5-aminolevulinate. It participates in porphyrin-containing compound metabolism; protoporphyrin-IX biosynthesis; 5-aminolevulinate from L-glutamyl-tRNA(Glu): step 2/2. The sequence is that of Glutamate-1-semialdehyde 2,1-aminomutase from Clostridium botulinum (strain Eklund 17B / Type B).